The sequence spans 366 residues: Alanine racemase (366 aa).

Residue K40 is the Proton acceptor; specific for D-alanine of the active site. K40 is subject to N6-(pyridoxal phosphate)lysine. R136 is a substrate binding site. The active-site Proton acceptor; specific for L-alanine is Y263. Residue M310 participates in substrate binding.

The protein belongs to the alanine racemase family. Requires pyridoxal 5'-phosphate as cofactor.

It carries out the reaction L-alanine = D-alanine. Its pathway is amino-acid biosynthesis; D-alanine biosynthesis; D-alanine from L-alanine: step 1/1. In terms of biological role, catalyzes the interconversion of L-alanine and D-alanine. May also act on other amino acids. The protein is Alanine racemase (alr) of Streptococcus pyogenes serotype M1.